We begin with the raw amino-acid sequence, 81 residues long: Penaeidin-3j (81 aa).

A signal peptide spans 1–19 (MRLVVCLVFLASFALVCQG). Pyrrolidone carboxylic acid is present on Q20. 3 cysteine pairs are disulfide-bonded: C50–C65, C54–C72, and C66–C73. The residue at position 80 (S80) is a Serine amide.

Belongs to the penaeidin family.

The protein localises to the cytoplasmic granule. Its function is as follows. Antibacterial and antifungal activity. Presents chitin-binding activity. This chain is Penaeidin-3j, found in Penaeus vannamei (Whiteleg shrimp).